The sequence spans 170 residues: Adenine phosphoribosyltransferase (170 aa).

The protein belongs to the purine/pyrimidine phosphoribosyltransferase family. As to quaternary structure, homodimer.

The protein localises to the cytoplasm. It catalyses the reaction AMP + diphosphate = 5-phospho-alpha-D-ribose 1-diphosphate + adenine. The protein operates within purine metabolism; AMP biosynthesis via salvage pathway; AMP from adenine: step 1/1. Functionally, catalyzes a salvage reaction resulting in the formation of AMP, that is energically less costly than de novo synthesis. The chain is Adenine phosphoribosyltransferase from Kosmotoga olearia (strain ATCC BAA-1733 / DSM 21960 / TBF 19.5.1).